We begin with the raw amino-acid sequence, 130 residues long: Large ribosomal subunit protein bL12 (130 aa).

This sequence belongs to the bacterial ribosomal protein bL12 family. In terms of assembly, homodimer. Part of the ribosomal stalk of the 50S ribosomal subunit. Forms a multimeric L10(L12)X complex, where L10 forms an elongated spine to which 2 to 4 L12 dimers bind in a sequential fashion. Binds GTP-bound translation factors.

Forms part of the ribosomal stalk which helps the ribosome interact with GTP-bound translation factors. Is thus essential for accurate translation. The protein is Large ribosomal subunit protein bL12 of Chlamydia muridarum (strain MoPn / Nigg).